Consider the following 307-residue polypeptide: Small ribosomal subunit biogenesis GTPase RsgA (307 aa).

The 159-residue stretch at 82–240 (GRYGERIVVA…IADTPGLREV (159 aa)) folds into the CP-type G domain. Residues 131-134 (NKAD) and 182-190 (GPSGVGKSS) each bind GTP. 4 residues coordinate Zn(2+): Cys-264, Cys-269, His-271, and Cys-277.

The protein belongs to the TRAFAC class YlqF/YawG GTPase family. RsgA subfamily. Monomer. Associates with 30S ribosomal subunit, binds 16S rRNA. The cofactor is Zn(2+).

Its subcellular location is the cytoplasm. Its function is as follows. One of several proteins that assist in the late maturation steps of the functional core of the 30S ribosomal subunit. Helps release RbfA from mature subunits. May play a role in the assembly of ribosomal proteins into the subunit. Circularly permuted GTPase that catalyzes slow GTP hydrolysis, GTPase activity is stimulated by the 30S ribosomal subunit. The sequence is that of Small ribosomal subunit biogenesis GTPase RsgA from Gemmatimonas aurantiaca (strain DSM 14586 / JCM 11422 / NBRC 100505 / T-27).